Here is a 341-residue protein sequence, read N- to C-terminus: Cell division protein FtsX (341 aa).

A disordered region spans residues 1-34 (MSTTRTPKVSERVAPKPADPQPAKKKRGEDDDGP). Topologically, residues 1 to 65 (MSTTRTPKVS…RRLGKQPIGS (65 aa)) are cytoplasmic. A helical transmembrane segment spans residues 66-86 (FFTCLVMAVALSMPMGLSLLL). The Periplasmic segment spans residues 87–212 (KNIEQLGGSW…LAAILKLGDR (126 aa)). A helical transmembrane segment spans residues 213-233 (FVFGLAVMLISALLLVIGNTI). The Cytoplasmic portion of the chain corresponds to 234-263 (RLHIENRRIEIEVIKLVGGTDAYVRRPFLY). A helical membrane pass occupies residues 264 to 284 (MGALYGLGAGLLAWGILAFGL). At 285–311 (NWLNEAVVGLSGLYGSDFALGGVPASD) the chain is on the periplasmic side. The helical transmembrane segment at 312-332 (GLSLLIGAVLLGYIGAWIAVA) threads the bilayer. Over 333 to 341 (RHLNELAPR) the chain is Cytoplasmic.

This sequence belongs to the ABC-4 integral membrane protein family. FtsX subfamily. Forms a membrane-associated complex with FtsE.

The protein localises to the cell inner membrane. Functionally, part of the ABC transporter FtsEX involved in cellular division. The polypeptide is Cell division protein FtsX (Pseudomonas putida (Arthrobacter siderocapsulatus)).